Consider the following 469-residue polypeptide: Citrate synthase, mitochondrial (469 aa).

The transit peptide at 1-33 (MAPVMRLGSAALRSSIHLTSRQTAFTAARCYSS) directs the protein to the mitochondrion. His352 is an active-site residue.

This sequence belongs to the citrate synthase family.

Its subcellular location is the mitochondrion matrix. The enzyme catalyses oxaloacetate + acetyl-CoA + H2O = citrate + CoA + H(+). Its pathway is carbohydrate metabolism; tricarboxylic acid cycle; isocitrate from oxaloacetate: step 1/2. This is Citrate synthase, mitochondrial (cit-1) from Neurospora crassa (strain ATCC 24698 / 74-OR23-1A / CBS 708.71 / DSM 1257 / FGSC 987).